Reading from the N-terminus, the 45-residue chain is Mu-conotoxin-like Cal 12.1.2d (45 aa).

Cystine bridges form between cysteine 3/cysteine 16, cysteine 11/cysteine 28, cysteine 18/cysteine 33, and cysteine 27/cysteine 39. A 6'-bromotryptophan modification is found at tryptophan 17. Position 23 is a 4-hydroxyproline (proline 23). 2 positions are modified to 6'-bromotryptophan: tryptophan 37 and tryptophan 38. Residue proline 40 is modified to 4-hydroxyproline.

As to expression, expressed by the venom duct.

The protein localises to the secreted. In terms of biological role, mu-conotoxins block voltage-gated sodium channels. This toxin reversibly blocks voltage-gated sodium channel in cephalopods, with no alteration in the voltage dependence of sodium conductance or on the kinetics of inactivation. The sequence is that of Mu-conotoxin-like Cal 12.1.2d from Californiconus californicus (California cone).